We begin with the raw amino-acid sequence, 101 residues long: Ubiquitin-related modifier 1 (101 aa).

1-thioglycine is present on Gly101. Gly101 participates in a covalent cross-link: Glycyl lysine isopeptide (Gly-Lys) (interchain with K-? in acceptor proteins).

This sequence belongs to the URM1 family. In terms of processing, C-terminal thiocarboxylation occurs in 2 steps, it is first acyl-adenylated (-COAMP) via the hesA/moeB/thiF part of UBA4, then thiocarboxylated (-COSH) via the rhodanese domain of UBA4.

Its subcellular location is the cytoplasm. Its pathway is tRNA modification; 5-methoxycarbonylmethyl-2-thiouridine-tRNA biosynthesis. Functionally, acts as a sulfur carrier required for 2-thiolation of mcm(5)S(2)U at tRNA wobble positions of cytosolic tRNA(Lys), tRNA(Glu) and tRNA(Gln). Serves as sulfur donor in tRNA 2-thiolation reaction by being thiocarboxylated (-COSH) at its C-terminus by the MOCS3 homolog UBA4. The sulfur is then transferred to tRNA to form 2-thiolation of mcm(5)S(2)U. Prior mcm(5) tRNA modification by the elongator complex is required for 2-thiolation. Also acts as a ubiquitin-like protein (UBL) that is covalently conjugated via an isopeptide bond to lysine residues of target proteins such as AHP1. The thiocarboxylated form serves as substrate for conjugation and oxidative stress specifically induces the formation of UBL-protein conjugates. This chain is Ubiquitin-related modifier 1, found in Debaryomyces hansenii (strain ATCC 36239 / CBS 767 / BCRC 21394 / JCM 1990 / NBRC 0083 / IGC 2968) (Yeast).